Reading from the N-terminus, the 234-residue chain is ATP-dependent dethiobiotin synthetase BioD (234 aa).

Residue 12-17 (GAGKTI) coordinates ATP. T16 contributes to the Mg(2+) binding site. K39 is an active-site residue. T43 serves as a coordination point for substrate. ATP contacts are provided by residues D47, 108 to 111 (EGLG), 168 to 169 (SC), and 200 to 202 (PYL). Mg(2+)-binding residues include D47 and E108.

The protein belongs to the dethiobiotin synthetase family. As to quaternary structure, homodimer. Requires Mg(2+) as cofactor.

It is found in the cytoplasm. The enzyme catalyses (7R,8S)-7,8-diammoniononanoate + CO2 + ATP = (4R,5S)-dethiobiotin + ADP + phosphate + 3 H(+). The catalysed reaction is (7R,8S)-8-amino-7-(carboxyamino)nonanoate + ATP = (4R,5S)-dethiobiotin + ADP + phosphate + H(+). The protein operates within cofactor biosynthesis; biotin biosynthesis; biotin from 7,8-diaminononanoate: step 1/2. In terms of biological role, catalyzes a mechanistically unusual reaction, the ATP-dependent insertion of CO2 between the N7 and N8 nitrogen atoms of 7,8-diaminopelargonic acid (DAPA, also called 7,8-diammoniononanoate) to form a ureido ring. This cyanobacterium does not encode bioA (which catalyzes the formation of the precursor for this reaction in the cannonical pathway), instead it encodes bioU, which replaces bioA and also performs the first half of the cannonical BioD reaction. Thus in this organism BioD has a different substrate. The polypeptide is ATP-dependent dethiobiotin synthetase BioD (Rippkaea orientalis (strain PCC 8801 / RF-1) (Cyanothece sp. (strain PCC 8801))).